We begin with the raw amino-acid sequence, 452 residues long: MNLMQFSGLLVVWLLSTLFIATLTWFEFRRVRFNFNVFFSLLFLLTFFFGFPLTSVLVFRFDVGVAPPEILLQALLSAACFYGVYYVTYKTRLRKRVVDVTRKPLFTMNRVETHLTWVILMGIALVSVGIFFMHNGFLLFRLHSYSQIFSSEVSGVALKRFFYFFIPAMLVVYFLRQDSKAWLFFLVSTVAFGLLTYMIVGGTRANIIIAFAIFLFIGIIRGWISLWMLAAAGVLGIVGMFWLALKRYGLNVSGDEAFYTFLYLTRDTFSPWENLALLLQNYHNIDFQGLAPIVRDFYVFIPTWLWPGRPSIVLNSANYFTWEVLNNHSGLAISPTLIGSLVVMGGALFIPLGAIVVGLIIKWFDWLYELGNREPNRYKAAILHSFCFGAIFNMIVLAREGLDSFVSRVVFFLVVFGASLLVAKLLFWLFDSAGLIHKRTTSLPQAQVERKL.

11 consecutive transmembrane segments (helical) span residues 6–26 (FSGL…LTWF), 37–57 (VFFS…TSVL), 63–83 (VGVA…CFYG), 118–138 (VILM…NGFL), 155–175 (GVAL…VYFL), 181–201 (AWLF…MIVG), 207–227 (IIIA…ISLW), 228–248 (MLAA…LKRY), 341–361 (LVVM…GLII), 378–398 (YKAA…IVLA), and 410–430 (VFFL…FWLF).

Belongs to the WzyE family. In terms of assembly, probably part of a complex composed of WzxE, WzyE and WzzE.

The protein localises to the cell inner membrane. It functions in the pathway bacterial outer membrane biogenesis; enterobacterial common antigen biosynthesis. In terms of biological role, probably involved in the polymerization of enterobacterial common antigen (ECA) trisaccharide repeat units. The chain is Probable ECA polymerase from Salmonella arizonae (strain ATCC BAA-731 / CDC346-86 / RSK2980).